The following is a 406-amino-acid chain: Leu/Ile/Val-binding protein homolog 5 (406 aa).

A signal peptide spans 1 to 29 (MIGTRLPAWTRVLACGVAGLSLMTISAKA).

This sequence belongs to the leucine-binding protein family.

Functionally, component of an amino-acid transport system. In Brucella abortus (strain 2308), this protein is Leu/Ile/Val-binding protein homolog 5.